The sequence spans 353 residues: Guanine nucleotide-binding protein G(q) subunit alpha (353 aa).

Residues cysteine 3 and cysteine 4 are each lipidated (S-palmitoyl cysteine). In terms of domain architecture, G-alpha spans 32–353 (RELKLLLLGT…QLNLKEYNLV (322 aa)). Residues 35 to 48 (KLLLLGTGESGKST) are G1 motif. Residues 40-47 (GTGESGKS), 174-180 (LRVRVPT), 199-203 (DVGGQ), 268-271 (NKKD), and alanine 325 contribute to the GTP site. Serine 47 and threonine 180 together coordinate Mg(2+). The segment at 172 to 180 (DILRVRVPT) is G2 motif. Positions 195–204 (FRMVDVGGQR) are G3 motif. Positions 264–271 (ILFLNKKD) are G4 motif. The tract at residues 323–328 (TCATDT) is G5 motif.

The protein belongs to the G-alpha family. G(q) subfamily. As to quaternary structure, g proteins are composed of 3 units; alpha, beta and gamma. The alpha chain contains the guanine nucleotide binding site.

Functionally, guanine nucleotide-binding proteins (G proteins) are involved as modulators or transducers in various transmembrane signaling systems. In Mizuhopecten yessoensis (Japanese scallop), this protein is Guanine nucleotide-binding protein G(q) subunit alpha (SCGQA).